The following is a 971-amino-acid chain: Sodium/calcium exchanger 1 (971 aa).

The first 32 residues, 1 to 32 (MLRLSLPPNVSMGFRLVTLVALLFTHVDHITA), serve as a signal peptide directing secretion. Over 33-71 (DTEAETGGNETTECTGSYYCKKGVILPIWEPQDPSFGDK) the chain is Extracellular. Residue Asn-41 is glycosylated (N-linked (GlcNAc...) asparagine). Residues 72–92 (IARATVYFVAMVYMFLGVSII) traverse the membrane as a helical segment. The Cytoplasmic portion of the chain corresponds to 93 to 133 (ADRFMSSIEVITSQEKEITIKKPNGETTKTTVRIWNETVSN). The helical transmembrane segment at 134-154 (LTLMALGSSAPEILLSVIEVC) threads the bilayer. Residues 138 to 178 (ALGSSAPEILLSVIEVCGHNFTAGDLGPSTIVGSAAFNMFI) form an Alpha-1 repeat. Residues 155–167 (GHNFTAGDLGPST) lie on the Extracellular side of the membrane. Asn-157 carries N-linked (GlcNAc...) asparagine glycosylation. A helical membrane pass occupies residues 168–188 (IVGSAAFNMFIIIALCVYVVP). Residues 189-201 (DGETRKIKHLRVF) lie on the Cytoplasmic side of the membrane. Residues 202–222 (FVTAAWSIFAYTWLYIILSVS) form a helical membrane-spanning segment. Topologically, residues 223-228 (SPGVVE) are extracellular. Residues 229–249 (VWEGLLTFFFFPICVVFAWVA) form a helical membrane-spanning segment. At 250–798 (DRRLLFYKYV…FVPPTEYWNG (549 aa)) the chain is on the cytoplasmic side. Positions 251–270 (RRLLFYKYVYKRYRAGKQRG) are putative calmodulin-binding region. Phosphoserine occurs at positions 282 and 389. 2 consecutive Calx-beta domains span residues 393 to 493 (VNMD…VHLS) and 524 to 624 (ATIT…IEIG). Ca(2+) contacts are provided by Glu-417, Asp-453, Asp-478, Asp-479, Ile-481, Glu-483, Glu-486, Asp-530, Asp-531, Asp-532, Glu-548, Asp-584, Asp-610, Glu-611, Glu-612, and Glu-716. The helical transmembrane segment at 799-819 (WACFIVSILMIGLLTAFIGDL) threads the bilayer. Topologically, residues 820 to 822 (ASH) are extracellular. Residues 823 to 843 (FGCTIGLKDSVTAVVFVALGT) form a helical membrane-spanning segment. The Alpha-2 repeat unit spans residues 840–876 (ALGTSVPDTFASKVAATQDQYADASIGNVTGSNAVNV). Topologically, residues 844–872 (SVPDTFASKVAATQDQYADASIGNVTGSN) are cytoplasmic. The helical transmembrane segment at 873-893 (AVNVFLGIGVAWSIAAIYHAA) threads the bilayer. Residues 894–904 (NGEQFKVSPGT) are Extracellular-facing. Residues 905 to 925 (LAFSVTLFTIFAFINVGVLLY) traverse the membrane as a helical segment. The Cytoplasmic portion of the chain corresponds to 926-942 (RRRPEIGGELGGPRTAK). Residues 943-963 (LLTSSLFVLLWLLYIFFSSLE) form a helical membrane-spanning segment. Residues 964–971 (AYCHIKGF) are Extracellular-facing.

It belongs to the Ca(2+):cation antiporter (CaCA) (TC 2.A.19) family. SLC8 subfamily. In terms of tissue distribution, detected in heart, brain cortex and hippocampus (at protein level). Cardiac sarcolemma or brain, and spleen. Expressed in all regions of the kidney, highest levels of expression in the distal convoluted tubule. Expressed throughout the CNS, in decreasing order of abundance in hippocampus, cortex, cerebellum, hypothalamus, midbrain and striatum. Expressed in numerous regions of the brain including multiple cortical layers, hippocampus, septal nuclei, thalamic nuclei, cerebellum, hypothalamus, olfactory bulb and brainstem. Also expressed in various regions of the spinal cord, ventricles and atria of the heart, lung, adrenals and kidney. Isoform 4 seems to be a predominant isoform in aorta, stomach, liver, and kidney.

It is found in the cell membrane. The protein localises to the cell projection. It localises to the dendrite. It catalyses the reaction Ca(2+)(in) + 3 Na(+)(out) = Ca(2+)(out) + 3 Na(+)(in). With respect to regulation, activated by micromolar levels of Ca(2+). Its activity is regulated as follows. Only active at low calcium concentrations. Not activated by PKC. Active at all calcium levels tested. Activated by PKC. With respect to regulation, only active at low calcium concentrations. Activated by PKC. Mediates the exchange of one Ca(2+) ion against three to four Na(+) ions across the cell membrane, and thereby contributes to the regulation of cytoplasmic Ca(2+) levels and Ca(2+)-dependent cellular processes. Contributes to Ca(2+) transport during excitation-contraction coupling in muscle. In a first phase, voltage-gated channels mediate the rapid increase of cytoplasmic Ca(2+) levels due to release of Ca(2+) stores from the endoplasmic reticulum. SLC8A1 mediates the export of Ca(2+) from the cell during the next phase, so that cytoplasmic Ca(2+) levels rapidly return to baseline. Required for normal embryonic heart development and the onset of heart contractions. This Rattus norvegicus (Rat) protein is Sodium/calcium exchanger 1 (Slc8a1).